The chain runs to 307 residues: UDP-N-acetylenolpyruvoylglucosamine reductase (307 aa).

The 163-residue stretch at 21–183 (RVGGPADLFF…TEVVMEGPPG (163 aa)) folds into the FAD-binding PCMH-type domain. Residue Arg163 is part of the active site. Over residues 200–209 (EATQPTKDRT) the composition is skewed to basic and acidic residues. The disordered stretch occupies residues 200–227 (EATQPTKDRTAGSTFRNPAGFSSTGRAD). Over residues 210 to 224 (AGSTFRNPAGFSSTG) the composition is skewed to polar residues. Ser212 (proton donor) is an active-site residue. Glu294 is a catalytic residue.

Belongs to the MurB family. Requires FAD as cofactor.

It localises to the cytoplasm. The enzyme catalyses UDP-N-acetyl-alpha-D-muramate + NADP(+) = UDP-N-acetyl-3-O-(1-carboxyvinyl)-alpha-D-glucosamine + NADPH + H(+). The protein operates within cell wall biogenesis; peptidoglycan biosynthesis. Its function is as follows. Cell wall formation. This Dinoroseobacter shibae (strain DSM 16493 / NCIMB 14021 / DFL 12) protein is UDP-N-acetylenolpyruvoylglucosamine reductase.